An 876-amino-acid polypeptide reads, in one-letter code: Valine--tRNA ligase (876 aa).

A 'HIGH' region motif is present at residues 44–54 (PNVTGKLHLGH). The 'KMSKS' region motif lies at 520-524 (KMSKS). Position 523 (lysine 523) interacts with ATP. Residues 805–876 (LEGLIDMDKE…VKSRIEQLKA (72 aa)) are a coiled coil.

It belongs to the class-I aminoacyl-tRNA synthetase family. ValS type 1 subfamily. In terms of assembly, monomer.

It is found in the cytoplasm. The catalysed reaction is tRNA(Val) + L-valine + ATP = L-valyl-tRNA(Val) + AMP + diphosphate. Catalyzes the attachment of valine to tRNA(Val). As ValRS can inadvertently accommodate and process structurally similar amino acids such as threonine, to avoid such errors, it has a 'posttransfer' editing activity that hydrolyzes mischarged Thr-tRNA(Val) in a tRNA-dependent manner. The protein is Valine--tRNA ligase of Staphylococcus epidermidis (strain ATCC 35984 / DSM 28319 / BCRC 17069 / CCUG 31568 / BM 3577 / RP62A).